The following is a 306-amino-acid chain: Serine/threonine-protein kinase csk1 (306 aa).

Residues 11-306 (LTDIRHLTDG…KVSARLSQYA (296 aa)) enclose the Protein kinase domain. ATP is bound by residues 17–25 (LTDGTISEV) and Lys40. Residue Asp129 is the Proton acceptor of the active site.

It belongs to the protein kinase superfamily. CMGC Ser/Thr protein kinase family. CDC2/CDKX subfamily.

It catalyses the reaction L-seryl-[protein] + ATP = O-phospho-L-seryl-[protein] + ADP + H(+). It carries out the reaction L-threonyl-[protein] + ATP = O-phospho-L-threonyl-[protein] + ADP + H(+). Acts as a CAK-activating kinase that specifically activates crk1 of the crk1-mcs2 CAK complex. The sequence is that of Serine/threonine-protein kinase csk1 (csk1) from Schizosaccharomyces pombe (strain 972 / ATCC 24843) (Fission yeast).